Consider the following 466-residue polypeptide: Ribosomal protein uS12 methylthiotransferase RimO (466 aa).

The MTTase N-terminal domain maps to P31 to P141. The [4Fe-4S] cluster site is built by C40, C76, C105, C172, C176, and C179. The region spanning L158–A397 is the Radical SAM core domain. The TRAM domain maps to A400–R466.

Belongs to the methylthiotransferase family. RimO subfamily. [4Fe-4S] cluster is required as a cofactor.

Its subcellular location is the cytoplasm. The enzyme catalyses L-aspartate(89)-[ribosomal protein uS12]-hydrogen + (sulfur carrier)-SH + AH2 + 2 S-adenosyl-L-methionine = 3-methylsulfanyl-L-aspartate(89)-[ribosomal protein uS12]-hydrogen + (sulfur carrier)-H + 5'-deoxyadenosine + L-methionine + A + S-adenosyl-L-homocysteine + 2 H(+). Catalyzes the methylthiolation of an aspartic acid residue of ribosomal protein uS12. The polypeptide is Ribosomal protein uS12 methylthiotransferase RimO (Ruegeria pomeroyi (strain ATCC 700808 / DSM 15171 / DSS-3) (Silicibacter pomeroyi)).